A 448-amino-acid polypeptide reads, in one-letter code: UDP-N-acetylmuramoylalanine--D-glutamate ligase (448 aa).

An ATP-binding site is contributed by 116-122 (GSNAKST).

This sequence belongs to the MurCDEF family.

It localises to the cytoplasm. The enzyme catalyses UDP-N-acetyl-alpha-D-muramoyl-L-alanine + D-glutamate + ATP = UDP-N-acetyl-alpha-D-muramoyl-L-alanyl-D-glutamate + ADP + phosphate + H(+). It participates in cell wall biogenesis; peptidoglycan biosynthesis. Functionally, cell wall formation. Catalyzes the addition of glutamate to the nucleotide precursor UDP-N-acetylmuramoyl-L-alanine (UMA). The protein is UDP-N-acetylmuramoylalanine--D-glutamate ligase of Pseudomonas fluorescens (strain ATCC BAA-477 / NRRL B-23932 / Pf-5).